An 801-amino-acid polypeptide reads, in one-letter code: Phenylalanine--tRNA ligase beta subunit (801 aa).

The 115-residue stretch at 39–153 folds into the tRNA-binding domain; the sequence is ADGLSKLVVG…EEAVPGDAIF (115 aa). Positions 406–481 constitute a B5 domain; sequence TEPVEVSTSL…RIYGYDKLPT (76 aa). Positions 459, 465, 468, and 469 each coordinate Mg(2+). The 94-residue stretch at 708-801 folds into the FDX-ACB domain; the sequence is TKFPAMTRDV…LTEQVGAEVR (94 aa).

The protein belongs to the phenylalanyl-tRNA synthetase beta subunit family. Type 1 subfamily. Tetramer of two alpha and two beta subunits. The cofactor is Mg(2+).

It is found in the cytoplasm. The enzyme catalyses tRNA(Phe) + L-phenylalanine + ATP = L-phenylalanyl-tRNA(Phe) + AMP + diphosphate + H(+). The polypeptide is Phenylalanine--tRNA ligase beta subunit (Streptococcus pyogenes serotype M1).